The sequence spans 158 residues: uncharacterized protein (158 aa).

One can recognise a Nudix hydrolase domain in the interval 3 to 130 (YLQRVTNCVL…DGHILDFMMK (128 aa)). The short motif at 34-55 (GKMESGESVRDSVIREYREETG) is the Nudix box element. E49 and E53 together coordinate Mg(2+).

This sequence belongs to the Nudix hydrolase family. Mg(2+) is required as a cofactor.

This is an uncharacterized protein from Bacillus subtilis (strain 168).